Consider the following 421-residue polypeptide: Testin (421 aa).

In terms of domain architecture, PET spans 92 to 199 (MILTNPVAAK…GDVKLPREMD (108 aa)). The tract at residues 133-164 (EKQPVAGSEGAQYRKKQLAKQLPAHDQDPSKC) is disordered. Residues 155 to 164 (PAHDQDPSKC) are compositionally biased toward basic and acidic residues. 3 consecutive LIM zinc-binding domains span residues 234-297 (YSCY…CDSE), 299-359 (PRCA…NHAV), and 362-421 (QGCH…KMMS).

The protein belongs to the prickle / espinas / testin family. In terms of assembly, interacts via LIM domain 1 with ZYX. Interacts (via LIM domain 3) with ENAH and VASP. Interacts with ALKBH4, talin, actin, alpha-actinin, GRIP1 and PXN. Interacts (via LIM domain 2) with ACTL7A (via N-terminus). Heterodimer with ACTL7A; the heterodimer interacts with ENAH to form a heterotrimer.

The protein localises to the cytoplasm. It is found in the cell junction. Its subcellular location is the focal adhesion. Functionally, scaffold protein that may play a role in cell adhesion, cell spreading and in the reorganization of the actin cytoskeleton. Plays a role in the regulation of cell proliferation. May act as a tumor suppressor. The chain is Testin (TES) from Neofelis nebulosa (Clouded leopard).